The chain runs to 336 residues: IgLON family member 5 (336 aa).

The N-terminal stretch at M1–S30 is a signal peptide. 3 consecutive Ig-like C2-type domains span residues L33–T122, P132–T213, and P218–L307. N-linked (GlcNAc...) asparagine glycans are attached at residues N41, N49, N67, and N137. C54 and C112 are oxidised to a cystine. Intrachain disulfides connect C154-C195 and C238-C291. N288 carries N-linked (GlcNAc...) asparagine glycosylation.

Belongs to the immunoglobulin superfamily. IgLON family.

It is found in the secreted. The sequence is that of IgLON family member 5 (Iglon5) from Mus musculus (Mouse).